Here is a 224-residue protein sequence, read N- to C-terminus: 7-cyano-7-deazaguanine synthase (224 aa).

10-20 (VSGGLDSATVL) provides a ligand contact to ATP. Residues cysteine 189, cysteine 199, cysteine 202, and cysteine 205 each coordinate Zn(2+).

It belongs to the QueC family. It depends on Zn(2+) as a cofactor.

It carries out the reaction 7-carboxy-7-deazaguanine + NH4(+) + ATP = 7-cyano-7-deazaguanine + ADP + phosphate + H2O + H(+). Its pathway is purine metabolism; 7-cyano-7-deazaguanine biosynthesis. Its function is as follows. Catalyzes the ATP-dependent conversion of 7-carboxy-7-deazaguanine (CDG) to 7-cyano-7-deazaguanine (preQ(0)). This is 7-cyano-7-deazaguanine synthase from Nitrosococcus oceani (strain ATCC 19707 / BCRC 17464 / JCM 30415 / NCIMB 11848 / C-107).